A 114-amino-acid polypeptide reads, in one-letter code: ATP-dependent Clp protease adapter protein ClpS (114 aa).

This sequence belongs to the ClpS family. As to quaternary structure, binds to the N-terminal domain of the chaperone ClpA.

Involved in the modulation of the specificity of the ClpAP-mediated ATP-dependent protein degradation. This Bdellovibrio bacteriovorus (strain ATCC 15356 / DSM 50701 / NCIMB 9529 / HD100) protein is ATP-dependent Clp protease adapter protein ClpS.